Reading from the N-terminus, the 181-residue chain is Ribosome maturation factor RimP (181 aa).

Belongs to the RimP family.

The protein resides in the cytoplasm. Functionally, required for maturation of 30S ribosomal subunits. In Mycolicibacterium smegmatis (strain ATCC 700084 / mc(2)155) (Mycobacterium smegmatis), this protein is Ribosome maturation factor RimP.